We begin with the raw amino-acid sequence, 418 residues long: MAEGLTREVRMEVPDTAELLRRSEDISGAPEGERLILNMGPSHPSTHGVFQLLLELDGEVITKAIPEVGYLHRGDEKIAENMQYNQFVPYTDRLDYLAPLANNVVYACAVEKLLGWEIPARAQVIRVICSEMARISSHLMGLGAYAMDCGAVSVFLYTFTEREKIYLLIEELTGARFTTSYTRIGGLTRDLPPGWTEKLKDFIKQFLPKVDEIEGLLTKNKIFVDRTQDIGIISKEDAIDYGLTGPNLRGSGVDHDLRKKNPYLGYEKYDFEVPLGSVGDCFDRYMVRIEEMRQSCRILDQALADIPPGPIAVDEPRGYLPKKSAVLTKMEELIQHFIVVTQGVDVPPGEVYFGGENPKGELGFYIVSKGGGVPYRLKIRSPSFVNLSILPKILPGHLLSDVVAILGSLDFVMGECDR.

It belongs to the complex I 49 kDa subunit family. As to quaternary structure, NDH-1 is composed of 14 different subunits. Subunits NuoB, C, D, E, F, and G constitute the peripheral sector of the complex.

The protein localises to the cell inner membrane. It catalyses the reaction a quinone + NADH + 5 H(+)(in) = a quinol + NAD(+) + 4 H(+)(out). NDH-1 shuttles electrons from NADH, via FMN and iron-sulfur (Fe-S) centers, to quinones in the respiratory chain. The immediate electron acceptor for the enzyme in this species is believed to be ubiquinone. Couples the redox reaction to proton translocation (for every two electrons transferred, four hydrogen ions are translocated across the cytoplasmic membrane), and thus conserves the redox energy in a proton gradient. The chain is NADH-quinone oxidoreductase subunit D from Methylacidiphilum infernorum (isolate V4) (Methylokorus infernorum (strain V4)).